The chain runs to 84 residues: MPNLGVPELLIIALVIFLLFGATRLPNAARSLGRSMRIFKSEMDEMKTDGDKKELAEKQAPTAEQQQAQDLAQPKSEQPNEHNA.

The chain crosses the membrane as a helical span at residues 1–21; it reads MPNLGVPELLIIALVIFLLFG. Basic and acidic residues predominate over residues 42–57; it reads EMDEMKTDGDKKELAE. Positions 42-84 are disordered; that stretch reads EMDEMKTDGDKKELAEKQAPTAEQQQAQDLAQPKSEQPNEHNA. Residues 62 to 77 are compositionally biased toward polar residues; that stretch reads TAEQQQAQDLAQPKSE.

The protein belongs to the TatA/E family. The Tat system comprises two distinct complexes: a TatABC complex, containing multiple copies of TatA, TatB and TatC subunits, and a separate TatA complex, containing only TatA subunits. Substrates initially bind to the TatABC complex, which probably triggers association of the separate TatA complex to form the active translocon.

It localises to the cell membrane. Functionally, part of the twin-arginine translocation (Tat) system that transports large folded proteins containing a characteristic twin-arginine motif in their signal peptide across membranes. TatA could form the protein-conducting channel of the Tat system. The sequence is that of Sec-independent protein translocase protein TatA from Corynebacterium jeikeium (strain K411).